Reading from the N-terminus, the 405-residue chain is Bifunctional enzyme IspD/IspF (405 aa).

The 2-C-methyl-D-erythritol 4-phosphate cytidylyltransferase stretch occupies residues 1-240; it reads MTLADKPVLS…KLLLDEPKYR (240 aa). The 2-C-methyl-D-erythritol 2,4-cyclodiphosphate synthase stretch occupies residues 240 to 405; it reads RVGTGYDIHR…LLYKIAPLHN (166 aa). Positions 246 and 248 each coordinate a divalent metal cation. 4-CDP-2-C-methyl-D-erythritol 2-phosphate contacts are provided by residues 246–248 and 277–278; these read DIH and HS. An a divalent metal cation-binding site is contributed by histidine 285. Residues 299 to 301, 375 to 378, and arginine 385 each bind 4-CDP-2-C-methyl-D-erythritol 2-phosphate; these read DIG and TTTE.

The protein in the N-terminal section; belongs to the IspD/TarI cytidylyltransferase family. IspD subfamily. It in the C-terminal section; belongs to the IspF family. A divalent metal cation is required as a cofactor.

It carries out the reaction 2-C-methyl-D-erythritol 4-phosphate + CTP + H(+) = 4-CDP-2-C-methyl-D-erythritol + diphosphate. The catalysed reaction is 4-CDP-2-C-methyl-D-erythritol 2-phosphate = 2-C-methyl-D-erythritol 2,4-cyclic diphosphate + CMP. It participates in isoprenoid biosynthesis; isopentenyl diphosphate biosynthesis via DXP pathway; isopentenyl diphosphate from 1-deoxy-D-xylulose 5-phosphate: step 2/6. It functions in the pathway isoprenoid biosynthesis; isopentenyl diphosphate biosynthesis via DXP pathway; isopentenyl diphosphate from 1-deoxy-D-xylulose 5-phosphate: step 4/6. Its function is as follows. Bifunctional enzyme that catalyzes the formation of 4-diphosphocytidyl-2-C-methyl-D-erythritol from CTP and 2-C-methyl-D-erythritol 4-phosphate (MEP) (IspD), and catalyzes the conversion of 4-diphosphocytidyl-2-C-methyl-D-erythritol 2-phosphate (CDP-ME2P) to 2-C-methyl-D-erythritol 2,4-cyclodiphosphate (ME-CPP) with a corresponding release of cytidine 5-monophosphate (CMP) (IspF). The polypeptide is Bifunctional enzyme IspD/IspF (Wolbachia sp. subsp. Brugia malayi (strain TRS)).